Consider the following 330-residue polypeptide: Endo-1,4-beta-xylanase (330 aa).

One can recognise a GH10 domain in the interval 2 to 330 (CSSIPSLREV…KPAFWRVVNI (329 aa)). E133 (proton donor) is an active-site residue. E240 acts as the Nucleophile in catalysis.

This sequence belongs to the glycosyl hydrolase 10 (cellulase F) family. Cytoplasmic xylanase subfamily.

Its subcellular location is the cytoplasm. It carries out the reaction Endohydrolysis of (1-&gt;4)-beta-D-xylosidic linkages in xylans.. Its pathway is glycan degradation; xylan degradation. The protein is Endo-1,4-beta-xylanase (xynA) of Geobacillus stearothermophilus (Bacillus stearothermophilus).